The primary structure comprises 222 residues: Putative hemin import ATP-binding protein HrtA (222 aa).

The region spanning 3–222 (LVVKDISKTF…QLYDGKIKNS (220 aa)) is the ABC transporter domain. Residue 39–46 (GASGSGKT) participates in ATP binding.

The protein belongs to the ABC transporter superfamily. HrtA family. As to quaternary structure, the complex is composed of two ATP-binding proteins (HrtA), two transmembrane proteins (HrtB) and a solute-binding protein.

The protein resides in the cell membrane. Part of the ABC transporter complex hrt involved in hemin import. Responsible for energy coupling to the transport system. This chain is Putative hemin import ATP-binding protein HrtA (hrtA), found in Staphylococcus epidermidis (strain ATCC 35984 / DSM 28319 / BCRC 17069 / CCUG 31568 / BM 3577 / RP62A).